Here is a 329-residue protein sequence, read N- to C-terminus: DGAT1/2-independent enzyme synthesizing storage lipids (329 aa).

The Lumenal segment spans residues 1–50 (MIDNNQTCAAGQDSVPYVTCMIYVLEEWLGVEQLEDYLNFANHLLWVFTP). A glycan (N-linked (GlcNAc...) asparagine) is linked at Asn-5. A helical membrane pass occupies residues 51–71 (LILLILPYFTIFLLYLTIIFL). Residues 72 to 120 (HIYKRKNVLKEAYSHNLWDGARKTVATLWDGHAAVWHGYEVHGMEKIPE) are Cytoplasmic-facing. The helical transmembrane segment at 121-141 (GAALIIFYHGAIPIDFYYFMA) threads the bilayer. The active site involves His-129. The Lumenal portion of the chain corresponds to 142 to 329 (KIFIQKGRTC…DRFHKEQKAH (188 aa)).

Belongs to the diacylglycerol acyltransferase family. Highly divergent. In terms of tissue distribution, widely expressed, with highest level in the brain, followed by lung and duodenum, and lowest levels in tongue, testis, skin and ileum.

It is found in the endoplasmic reticulum membrane. It catalyses the reaction a 1,2-diacylglycerol + a 1,2-diacyl-sn-glycero-3-phosphocholine = a triacylglycerol + a 1-acyl-sn-glycero-3-phosphocholine. It carries out the reaction a 1-O-alkyl-2-acyl-sn-glycero-3-phosphocholine + a 1,2-diacylglycerol = a 1-O-alkyl-sn-glycero-3-phosphocholine + a triacylglycerol. The enzyme catalyses a 2-acylglycerol + an acyl-CoA = a 1,2-diacylglycerol + CoA. The catalysed reaction is an acyl-CoA + a 1,2-diacyl-sn-glycerol = a triacyl-sn-glycerol + CoA. It catalyses the reaction 2-(9Z-octadecenoyl)-glycerol + (9Z)-octadecenoyl-CoA = 1,2-di-(9Z-octadecenoyl)-glycerol + CoA. It carries out the reaction 1,2-di-(9Z-octadecenoyl)-sn-glycerol + (9Z)-octadecenoyl-CoA = 1,2,3-tri-(9Z-octadecenoyl)-glycerol + CoA. Acyltransferase activity is specifically inhibited by TMX1 at the endoplasmic reticulum, restricting accumulation of triacylglycerol. Functionally, catalytic subunit of the alternative triglyceride biosynthesis pathway, which mediates formation of triacylglycerol from diacylglycerol and membrane phospholipids. Synthesizes triacylglycerol at the expense of membrane phospholipids, such as phosphatidylcholine (PC) and its ether-linked form (ePC), thereby altering the composition of membranes. The alternative triglyceride biosynthesis pathway is probably required to provide the energy required for rapid growth when fuel sources are limiting. It maintains mitochondrial function during periods of extracellular lipid starvation. Can also use acyl-CoA as donor: acts as a acyl-CoA:monoacylglycerol acyltransferase (MGAT), but also shows acyl-CoA:diacylglycerol acyltransferase (DGAT) activity. The polypeptide is DGAT1/2-independent enzyme synthesizing storage lipids (Mus musculus (Mouse)).